Here is a 300-residue protein sequence, read N- to C-terminus: DNA repair protein PprA (300 aa).

Residue threonine 88 is modified to Phosphothreonine. Serine 128 carries the post-translational modification Phosphoserine. The residue at position 160 (threonine 160) is a Phosphothreonine.

In terms of processing, phosphorylated by RqkA in vitro. Phosphorylated primarily at Thr-88, and to a little extent at Ser-128 and Thr-160.

Its activity is regulated as follows. Phosphorylation increases DNA binding affinity. Its function is as follows. dsDNA-binding protein that contributes to the ionizing radiation resistance of D.radiodurans. Plays a role in DNA repair and genome reconstitution, and is necessary for recovery from severe genomic fragmentation as a result of exposure to severe levels of ionizing radiation. In vitro, binds to double-stranded DNA carrying strand breaks and stimulates the DNA end-joining reaction catalyzed by DNA ligases. Thus, PprA plays a critical role in a non-homologous end-joining (NHEJ) pathway for the repair of radiation-induced DNA double-strands breaks. Cannot bind to dsDNA without strand breaks or single-stranded DNA. This chain is DNA repair protein PprA (pprA), found in Deinococcus radiodurans (strain ATCC 13939 / DSM 20539 / JCM 16871 / CCUG 27074 / LMG 4051 / NBRC 15346 / NCIMB 9279 / VKM B-1422 / R1).